The following is a 224-amino-acid chain: Small ribosomal subunit protein uS2 (224 aa).

Residues 1-14 (MAEAKPAPEKEAAV) are compositionally biased toward basic and acidic residues. A disordered region spans residues 1 to 32 (MAEAKPAPEKEAAVKTESVPVADDEAASAKEG).

The protein belongs to the universal ribosomal protein uS2 family.

This Methanosarcina mazei (strain ATCC BAA-159 / DSM 3647 / Goe1 / Go1 / JCM 11833 / OCM 88) (Methanosarcina frisia) protein is Small ribosomal subunit protein uS2.